The chain runs to 673 residues: MKMTRLYPLALGGLLLPAIANAQTSQQDESTLEVTASKQSSRSASANNVSSTVVSAPELSDAGVTASDKLPRVLPGLNIENSGNMLFSTISLRGVSSAQDFYNPAVTLYVDGVPQLSTNTIQALTDVQSVELLRGPQGTLYGKSAQGGIINIVTQQPDSTPRGYIEGGVSSRDSYRSKFNLSGPIQDGLLYGSVTLLRQVDDGDMINPATGSDDLGGTRASIGNVKLRLAPDDQPWEMGFAASRECTRATQDAYVGWNDIKGRKLSLSDGSPDPYMRRCTDSQTLSGKYTTDDWVFNLISAWQQQHYSRTFPSGSLIVNMPQRWNQDVQELRAATLGDARTVDMVFGLYRQNTREKLNSAYDMPTMPYLSSTGYTTAETLAAYSDLTWHLTDRFDIGGGVRFSHDKSSTQYHGSMLGNPFGDQGKSNDDQVLGQLSAGYMLTDDWRVYTRIAQGYKPSGYNIVPTAGLDAKPFVAEKSINYELGTRYETADVTLQAATFYTHTKDMQLYSGPVGMQTLSNAGKADATGVELEAKWRFAPGWSWDINGNVIRSEFTNDSELYHGNRVPFVPRYGAGSSVNGVIDTRYGALMPRLAVNLVGPHYFDGDNQLRQGTYATLDSSLGWQATERINISVHVDNLFDRRYRTYGYMNGSSAVAQVNMGRTVGINTRIDFF.

The signal sequence occupies residues 1-22; it reads MKMTRLYPLALGGLLLPAIANA. A TonB box motif is present at residues 30–37; sequence STLEVTAS. Residues 41-155 enclose the TBDR plug domain; it reads SRSASANNVS…QGGIINIVTQ (115 aa). The 513-residue stretch at 160–672 folds into the TBDR beta-barrel domain; sequence TPRGYIEGGV…TVGINTRIDF (513 aa). Positions 657–673 match the TonB C-terminal box motif; it reads QVNMGRTVGINTRIDFF.

This sequence belongs to the TonB-dependent receptor family.

Its subcellular location is the cell outer membrane. In terms of biological role, receptor for the bacteriocin pesticin and for the siderophore yersiniabactin. This chain is Pesticin receptor (fyuA), found in Yersinia enterocolitica serotype O:8 / biotype 1B (strain NCTC 13174 / 8081).